The chain runs to 260 residues: Electron transfer flavoprotein subunit beta (260 aa).

Belongs to the ETF beta-subunit/FixA family. In terms of assembly, heterodimer of an alpha and a beta subunit. The cofactor is FAD. It depends on AMP as a cofactor.

Functionally, the electron transfer flavoprotein serves as a specific electron acceptor for other dehydrogenases. It transfers the electrons to the main respiratory chain via ETF-ubiquinone oxidoreductase (ETF dehydrogenase). The protein is Electron transfer flavoprotein subunit beta (etfB) of Thermoanaerobacterium thermosaccharolyticum (strain ATCC 7956 / DSM 571 / NCIMB 9385 / NCA 3814 / NCTC 13789 / WDCM 00135 / 2032) (Clostridium thermosaccharolyticum).